Consider the following 523-residue polypeptide: Tyrosine-protein kinase transforming protein Src (523 aa).

The segment at Met1 to Ser50 is disordered. A lipid anchor (N-myristoyl glycine; by host) is attached at Gly2. Over residues Lys7–His25 the composition is skewed to basic and acidic residues. Residues Thr71 to Ser139 enclose the SH3 domain. Positions Trp145–Cys242 constitute an SH2 domain. The Protein kinase domain occupies Leu264–Leu514. ATP is bound by residues Leu270–Val278 and Lys292. Residue Asp383 is the Proton acceptor of the active site. At Tyr413 the chain carries Phosphotyrosine; by autocatalysis.

Belongs to the protein kinase superfamily. Tyr protein kinase family. SRC subfamily. In terms of assembly, homodimer. In terms of processing, the phosphorylated form is termed pp60v-src.

The enzyme catalyses L-tyrosyl-[protein] + ATP = O-phospho-L-tyrosyl-[protein] + ADP + H(+). Functionally, this phosphoprotein, required for both the initiation and the maintenance of neoplastic transformation, is a protein kinase that catalyzes the phosphorylation of tyrosine residues in vitro. In Gallus gallus (Chicken), this protein is Tyrosine-protein kinase transforming protein Src (V-SRC).